A 182-amino-acid chain; its full sequence is Large ribosomal subunit protein uL22 (182 aa).

The disordered stretch occupies residues 155–182 (SGVDGAKQGKKKKKTDGVEKATTKRQKQ).

It belongs to the universal ribosomal protein uL22 family.

The polypeptide is Large ribosomal subunit protein uL22 (RpL17) (Carabus granulatus (Ground beetle)).